We begin with the raw amino-acid sequence, 84 residues long: Beta-cardiotoxin CTX14 (84 aa).

The signal sequence occupies residues 1 to 21 (MKTLLLTLVVVTIVCLDLGYT). Cystine bridges form between Cys24–Cys43, Cys36–Cys61, Cys65–Cys76, and Cys77–Cys82.

The protein belongs to the three-finger toxin family. Short-chain subfamily. Aminergic toxin sub-subfamily. Expressed by the venom gland.

It localises to the secreted. Its function is as follows. Acts as a beta-blocker by binding to beta-1 and beta-2 adrenergic receptors (ADRB1 and ADRB2). It dose-dependently decreases the heart rate (bradycardia), whereas conventional cardiotoxins increases it. At 100 mg/kg, intraperitoneal injection into mice provokes labored breathing, impaired locomotion, lack of response to external stimuli, and death (after 30 minutes). This chain is Beta-cardiotoxin CTX14, found in Ophiophagus hannah (King cobra).